A 524-amino-acid chain; its full sequence is Zinc finger protein GLIS2 (524 aa).

The segment at 35-174 is interaction with CTNND1; that stretch reads ALHRELGLVD…PKQLVCRWAK (140 aa). Disordered regions lie at residues 39–62 and 84–114; these read ELGL…FLLN and SPPS…VPSA. The transcription activation stretch occupies residues 71–137; it reads GRFSAAPLVD…SSFQFFLPLG (67 aa). A compositionally biased stretch (low complexity) spans 84–100; sequence SPPSGLDSPNGSSSLSP. Residues 148–171 form a transcription repression region; it reads SFLTPPKDKCLSPDLPLPKQLVCR. The C2H2-type 1 zinc finger occupies 168–193; it reads LVCRWAKCNQLFELLQDLVDHVNDYH. The segment at 202 to 229 adopts a C2H2-type 2; atypical zinc-finger fold; that stretch reads YCCHWEGCARHGRGFNARYKMLIHIRTH. C2H2-type zinc fingers lie at residues 235–257, 263–287, and 293–317; these read HRCP…NRSH, YVCP…TRTH, and YYCK…IKAH. The interval 439-480 is disordered; that stretch reads GGKAEGEKGRGSVPTRALGMEGHKTPLERTESSCSRPSPDGL. A compositionally biased stretch (basic and acidic residues) spans 459–469; it reads EGHKTPLERTE.

Belongs to the GLI C2H2-type zinc-finger protein family. As to quaternary structure, interacts with CTBP1 and HDAC3. Interacts with CTNNB1. Interacts with SUFU. Interacts with CTNND1. C-terminus cleavage is induced by interaction with CTNND1 and enhanced by Src tyrosine kinase. As to expression, expressed at high levels in kidney and at low levels in heart, lung and placenta. Expressed in colon.

The protein localises to the nucleus speckle. It localises to the cytoplasm. Its function is as follows. Can act either as a transcriptional repressor or as a transcriptional activator, depending on the cell context. Acts as a repressor of the Hedgehog signaling pathway. Represses the Hedgehog-dependent expression of Wnt4. Necessary to maintain the differentiated epithelial phenotype in renal cells through the inhibition of SNAI1, which itself induces the epithelial-to-mesenchymal transition. Represses transcriptional activation mediated by CTNNB1 in the Wnt signaling pathway. May act by recruiting the corepressors CTBP1 and HDAC3. May be involved in neuron differentiation. In Homo sapiens (Human), this protein is Zinc finger protein GLIS2 (GLIS2).